Reading from the N-terminus, the 359-residue chain is DNA replication and repair protein RecF (359 aa).

30 to 37 contributes to the ATP binding site; sequence GQNAQGKT.

This sequence belongs to the RecF family.

It localises to the cytoplasm. Functionally, the RecF protein is involved in DNA metabolism; it is required for DNA replication and normal SOS inducibility. RecF binds preferentially to single-stranded, linear DNA. It also seems to bind ATP. The protein is DNA replication and repair protein RecF of Lactococcus lactis subsp. cremoris (strain SK11).